The chain runs to 112 residues: UPF0145 protein CD630_17110 (112 aa).

It belongs to the UPF0145 family.

The polypeptide is UPF0145 protein CD630_17110 (Clostridioides difficile (strain 630) (Peptoclostridium difficile)).